The chain runs to 332 residues: tRNA dimethylallyltransferase (332 aa).

Residue 17-24 (GPTCSGKS) coordinates ATP. Position 19 to 24 (19 to 24 (TCSGKS)) interacts with substrate. Interaction with substrate tRNA stretches follow at residues 42-45 (DSMQ) and 166-170 (QRISR).

The protein belongs to the IPP transferase family. As to quaternary structure, monomer. The cofactor is Mg(2+).

It catalyses the reaction adenosine(37) in tRNA + dimethylallyl diphosphate = N(6)-dimethylallyladenosine(37) in tRNA + diphosphate. Catalyzes the transfer of a dimethylallyl group onto the adenine at position 37 in tRNAs that read codons beginning with uridine, leading to the formation of N6-(dimethylallyl)adenosine (i(6)A). In Gluconobacter oxydans (strain 621H) (Gluconobacter suboxydans), this protein is tRNA dimethylallyltransferase.